Here is a 179-residue protein sequence, read N- to C-terminus: Large ribosomal subunit protein uL10 (179 aa).

This sequence belongs to the universal ribosomal protein uL10 family. In terms of assembly, part of the ribosomal stalk of the 50S ribosomal subunit. The N-terminus interacts with L11 and the large rRNA to form the base of the stalk. The C-terminus forms an elongated spine to which L12 dimers bind in a sequential fashion forming a multimeric L10(L12)X complex.

In terms of biological role, forms part of the ribosomal stalk, playing a central role in the interaction of the ribosome with GTP-bound translation factors. In Polynucleobacter necessarius subsp. necessarius (strain STIR1), this protein is Large ribosomal subunit protein uL10.